We begin with the raw amino-acid sequence, 143 residues long: Small ribosomal subunit protein uS12 (143 aa).

Pro62 carries the hydroxyproline modification.

The protein belongs to the universal ribosomal protein uS12 family. As to quaternary structure, component of the 40S small ribosomal subunit.

It localises to the cytoplasm. The protein resides in the cytosol. It is found in the rough endoplasmic reticulum. This Caenorhabditis elegans protein is Small ribosomal subunit protein uS12 (rps-23).